Consider the following 477-residue polypeptide: MAAAFSSDGEAVLRRTLDPAAAAPRGDKDEFYEVDRAAAFVRDGGFRKVALQFPDALLADAAAVAARMEEVTGAEMYVLGDTTYGSCCVDEVAAEHVSAGAVVHYGPACLSPCRKLPVLHVFGRQPLDVGRCAEVFRELYPERQSRVVVLSDVVYAHAMGELEKQLCHEYPNIIFSEVVCGDAPSPTLPGEVRQFGRRFHMEAAEELQDCSMFYVGAEGLALTSFMLTWNRFPFSSFDPATGHGRRETLNVNRALMRRLYLVERARDAHVVGILVGTLGVAGYLDVLEHLHQLVRRAGKRSYTLSVGKPNPAKLANFLEVDIFVLVACAQNSLLDSSEFYRPIVTPYELELACNPAREWTGNYLTDFRDLLPGACAHIELPPAVPAAEAIPDVSLITGEMRATHLCDPLAPQPPSSTTLACRDQTRALAEMSPAATFLESRSWRGLEQQLGKTAVSKAVQGRRGIAIAYEDEGREQS.

[4Fe-4S] cluster contacts are provided by cysteine 88, cysteine 109, and cysteine 328.

It belongs to the DPH1/DPH2 family. DPH2 subfamily. Component of the 2-(3-amino-3-carboxypropyl)histidine synthase complex composed of DPH1, DPH2, DPH3 and a NADH-dependent reductase. The cofactor is [4Fe-4S] cluster.

It functions in the pathway protein modification; peptidyl-diphthamide biosynthesis. Functionally, required for the first step of diphthamide biosynthesis, a post-translational modification of histidine which occurs in elongation factor 2. DPH1 and DPH2 transfer a 3-amino-3-carboxypropyl (ACP) group from S-adenosyl-L-methionine (SAM) to a histidine residue, the reaction is assisted by a reduction system comprising DPH3 and a NADH-dependent reductase. Facilitates the reduction of the catalytic iron-sulfur cluster found in the DPH1 subunit. The protein is 2-(3-amino-3-carboxypropyl)histidine synthase subunit 2 (DPH2) of Gallus gallus (Chicken).